Consider the following 617-residue polypeptide: Putative type VI secretion system protein VgrGA (617 aa).

Disordered stretches follow at residues 325–344 (GQQPQALEEESGGEPTTLSN) and 449–469 (RTFHATNPSPYPLPASKTRTS).

The protein belongs to the VgrG protein family.

In terms of biological role, a Vgr protein that is probably part of a type VI secretion system (T6SS). May be required for export of proteins involved in Rhs-mediated cellular contact-dependent growth inhibition (CDI). In Dickeya dadantii (strain 3937) (Erwinia chrysanthemi (strain 3937)), this protein is Putative type VI secretion system protein VgrGA (vgrGA).